The following is a 98-amino-acid chain: MPPIFTNVILAFATAFLGTLIFRSHLMSSLLCLEGMMLSLFILSTLIILNMHLTVSFMMPILLLVFAACEAAIGLALLVMVSNTYGLDHIKNLNLLQC.

Transmembrane regions (helical) follow at residues 2–22 (PPIFTNVILAFATAFLGTLIF), 29–49 (SLLCLEGMMLSLFILSTLIIL), and 61–81 (ILLLVFAACEAAIGLALLVMV).

It belongs to the complex I subunit 4L family. As to quaternary structure, core subunit of respiratory chain NADH dehydrogenase (Complex I) which is composed of 45 different subunits.

The protein resides in the mitochondrion inner membrane. The catalysed reaction is a ubiquinone + NADH + 5 H(+)(in) = a ubiquinol + NAD(+) + 4 H(+)(out). Functionally, core subunit of the mitochondrial membrane respiratory chain NADH dehydrogenase (Complex I) which catalyzes electron transfer from NADH through the respiratory chain, using ubiquinone as an electron acceptor. Part of the enzyme membrane arm which is embedded in the lipid bilayer and involved in proton translocation. This is NADH-ubiquinone oxidoreductase chain 4L (MT-ND4L) from Avahi occidentalis (Western woolly lemur).